The chain runs to 238 residues: Thymidine kinase, cytosolic (238 aa).

At Ser2 the chain carries N-acetylserine. Ser2 and Ser13 each carry phosphoserine. ATP-binding positions include 26 to 33 (GPMFSGKS), 58 to 60 (DTR), and 97 to 100 (DEGQ). The Proton acceptor role is filled by Glu98. A substrate-binding site is contributed by Phe128. Residues Cys153 and Cys156 each coordinate Zn(2+). Substrate-binding positions include 172 to 176 (VEVIG) and Tyr181. Zn(2+) contacts are provided by Cys185 and Cys188. The KEN box motif lies at 206–208 (KEN). The residue at position 235 (Ser235) is a Phosphoserine.

It belongs to the thymidine kinase family. Homotetramer. Tetramerization from dimerization is induced by ATP and increases catalytic efficiency due to a high affinity for thymidine. Tetramerization is inhibited by phosphorylation at Ser-13. Interacts (via the KEN box) with FZR1. Post-translationally, phosphorylated on Ser-13 in mitosis. Phosphorylation of Ser-13 by CDK1 during mitosis reduces homotetramerization and catalytic efficiency when DNA replication is complete and intracellular TK1 is still present at a high level. In terms of processing, polyubiquitinated. Postmitosis, ubiquitination leads to proteasomal degradation. The KEN box sequence located at the C-terminal region targets for degradation by the anaphase promoting complex (APC/C) activated and rate-limited by FZR1.

The protein localises to the cytoplasm. The enzyme catalyses thymidine + ATP = dTMP + ADP + H(+). Its function is as follows. Cell-cycle-regulated enzyme of importance in nucleotide metabolism. Catalyzes the first enzymatic step in the salvage pathway converting thymidine into thymidine monophosphate. Transcriptional regulation limits expression to the S phase of the cell cycle and transient expression coincides with the oscillation in the intracellular dTTP concentration. The chain is Thymidine kinase, cytosolic (TK1) from Bos taurus (Bovine).